We begin with the raw amino-acid sequence, 187 residues long: Translation initiation factor IF-3 (187 aa).

The protein belongs to the IF-3 family. Monomer.

It localises to the cytoplasm. Functionally, IF-3 binds to the 30S ribosomal subunit and shifts the equilibrium between 70S ribosomes and their 50S and 30S subunits in favor of the free subunits, thus enhancing the availability of 30S subunits on which protein synthesis initiation begins. This is Translation initiation factor IF-3 from Leptospira biflexa serovar Patoc (strain Patoc 1 / Ames).